We begin with the raw amino-acid sequence, 781 residues long: MNFNDIDNQMYGNLEEDAELLAELAAIQEEEMGRVSRPAAPARGAPPAARGRPAPAAPANVPGLDPRLLAAALADNHGDGGDEELEMDEDLLNELNGLVGGGGGGGAAPTVPTRAAPRAPGPSGPPPSASAPNSQLGHLKQLHVYYMKAHKSAEQAGEGPKARRYKRAVDKLVELIRAVERGKTIDESEIPVAPPNFSSAAAEPLPPPAPTAQPAHHPPAPPIRQAAHAAESSPPPIPQRKSSAPAPTAAAPPATKEPTDPKKAAIYRILHHRRDLHKQNARAAIADKDKESAKESVEMAKAFDQAIAALNECSADEMDMNDVPPSPPPYRKPAPPQPQAPPTSAGPLGFIEELQQRQQRFQKMAEKAKTEGNERKMKMNMRLAGQFDEAIKEAKRGKLVNVGELPSLPDMGPLPPQTAPGQAAPKLHQRPPPQEVGPLAPSGVEGKSRNQGQLEFLLERQAQFKQAAIHAKSRGDVEAAKKYLVEMKGFDKMIQAAQAGLPVSIKATPIPPQAQTASTTLQPRIQSAAASSSTGVENRGEKLSLLEKTLIEQVRSAETNQMRFTRLGDVGKVRLFEGWGKVAKQDLLLVREVAKRGLQVPKFHYEMRQIPSADLFPDLADDVIELTIVSCRDVPLPSGYETHHANLFIKYTFPAVVNDLPQTGKTKLIAGTASPDFGESIMLNIGSGKSRNSKLQRTFKRGGLKFEVFQKGGFMRSDKLLGTCEWKLEKLEHSAEMEESLPLKDGRKAVGGLLSAKVRIRQPIGDAKAQHIAQKWLILDN.

Disordered regions lie at residues 32 to 63 (MGRV…NVPG), 94 to 134 (ELNG…APNS), 187 to 296 (ESEI…AKES), 313 to 373 (CSAD…TEGN), and 403 to 447 (GELP…VEGK). The segment covering 37–59 (RPAAPARGAPPAARGRPAPAAPA) has biased composition (low complexity). Positions 98-107 (LVGGGGGGGA) are enriched in gly residues. The span at 108 to 118 (APTVPTRAAPR) shows a compositional bias: low complexity. Pro residues-rich tracts occupy residues 119 to 129 (APGPSGPPPSA) and 204 to 222 (PLPP…PAPP). Low complexity predominate over residues 244-256 (APAPTAAAPPATK). Positions 269–280 (ILHHRRDLHKQN) are enriched in basic residues. Residues 285–296 (IADKDKESAKES) are compositionally biased toward basic and acidic residues. Over residues 324–341 (PPSPPPYRKPAPPQPQAP) the composition is skewed to pro residues. Residues 363–373 (KMAEKAKTEGN) show a composition bias toward basic and acidic residues. One can recognise a C2 domain in the interval 605–741 (YEMRQIPSAD…EHSAEMEESL (137 aa)).

Belongs to the CC2D1 family.

The polypeptide is Coiled-coil and C2 domain-containing protein 1-like (Caenorhabditis elegans).